We begin with the raw amino-acid sequence, 299 residues long: Probable lipid kinase YegS (299 aa).

The DAGKc domain occupies 2–133; sequence AEFPASLLIL…IDMAQVNKQT (132 aa). ATP contacts are provided by residues Thr40, 66–72, and Thr95; that span reads GDGTINE. Mg(2+) contacts are provided by Leu215, Asp218, and Leu220. The Proton acceptor role is filled by Glu271.

The protein belongs to the diacylglycerol/lipid kinase family. YegS lipid kinase subfamily. Mg(2+) serves as cofactor. Requires Ca(2+) as cofactor.

The protein resides in the cytoplasm. Probably phosphorylates lipids; the in vivo substrate is unknown. This is Probable lipid kinase YegS from Escherichia coli O9:H4 (strain HS).